The sequence spans 244 residues: L-xylulose reductase (244 aa).

M1 is subject to N-acetylmethionine. L11 to T40 contributes to the NADP(+) binding site. Residue R21 is modified to Omega-N-methylarginine. S46 is subject to Phosphoserine. S136 contacts substrate. Y149 acts as the Proton acceptor in catalysis. K153 contacts NADP(+).

This sequence belongs to the short-chain dehydrogenases/reductases (SDR) family. Homotetramer. In terms of tissue distribution, highly expressed in kidney, liver and epididymis. In the epididymis, it is mainly expressed in the proximal and distal sections of the corpus region. Weakly or not expressed in brain, lung, heart, spleen and testis.

Its subcellular location is the membrane. The catalysed reaction is xylitol + NADP(+) = L-xylulose + NADPH + H(+). Its function is as follows. Catalyzes the NADPH-dependent reduction of several pentoses, tetroses, trioses, alpha-dicarbonyl compounds and L-xylulose. Participates in the uronate cycle of glucose metabolism. May play a role in the water absorption and cellular osmoregulation in the proximal renal tubules by producing xylitol, an osmolyte, thereby preventing osmolytic stress from occurring in the renal tubules. The chain is L-xylulose reductase (DCXR) from Homo sapiens (Human).